Consider the following 338-residue polypeptide: MRYKKTLMLSIMITSFNSFAFNDNYSSTSTVYATSNEATDSRGSEHLRYPYLECIKIGMSRDYLENCVKVSFPTSQDMFYDAYPSTESDGAKTRTKEDFSARLLAGDYDSLQKLYIDFYLAQTTFDWEIPTRDQIETLVNYANEGKLSTALNQEYITGRFLTKENGRYDIVNVGGVPDNTPVKLPAIVSKRGLMGTTSVVNAIPNEIYPHIKVYEGTLSRLKPGGAMIAVLEYDVNELSKHGYTNLWDVQFKVLVGVPHAETGVIYDPVYEETVKPYQPSNNLTGKKLYNVSTNDMHNGYKWSNTMFSNSNYKTQILLTKGDGSGVKLYSKAYSENFK.

A signal peptide spans 1–20 (MRYKKTLMLSIMITSFNSFA).

Its subcellular location is the cell outer membrane. In terms of biological role, involved in TCP pilus biogenesis. May be a channel protein. The polypeptide is Toxin coregulated pilus biosynthesis protein F (tcpF) (Vibrio cholerae serotype O1 (strain ATCC 39541 / Classical Ogawa 395 / O395)).